Consider the following 562-residue polypeptide: Arginine--tRNA ligase (562 aa).

Residues 121–131 carry the 'HIGH' region motif; it reads PNIAKPFSVGH.

Belongs to the class-I aminoacyl-tRNA synthetase family. Monomer.

The protein resides in the cytoplasm. The enzyme catalyses tRNA(Arg) + L-arginine + ATP = L-arginyl-tRNA(Arg) + AMP + diphosphate. This Streptococcus suis (strain 98HAH33) protein is Arginine--tRNA ligase.